A 406-amino-acid chain; its full sequence is Immediate early response gene 5-like protein (406 aa).

2 disordered regions span residues 166 to 195 (QPPH…APAA) and 216 to 235 (AAPS…PSSS). The segment covering 182–193 (QPGPAPLPPPAP) has biased composition (pro residues).

This sequence belongs to the IER family.

The sequence is that of Immediate early response gene 5-like protein (Ier5l) from Mus musculus (Mouse).